The primary structure comprises 178 residues: Single-stranded DNA-binding protein DdrB (178 aa).

A disordered region spans residues 139–178 (RYAVPGSNRPQAGAPARSAATRAQGARPGAVAVQDEETPF). Positions 147–165 (RPQAGAPARSAATRAQGAR) are enriched in low complexity.

Homopentamer; arranged in a ring-structure.

Its function is as follows. ssDNA-binding protein that probably contributes to the ionizing radiation resistance of D.geothermalis. Plays a role in DNA repair and genome reconstitution, in a RecA-independent process, and is necessary for recovery from severe genomic fragmentation as a result of exposure to severe levels of ionizing radiation. Binds single-stranded DNA but not duplex DNA. The chain is Single-stranded DNA-binding protein DdrB (ddrB) from Deinococcus geothermalis (strain DSM 11300 / CIP 105573 / AG-3a).